Here is a 65-residue protein sequence, read N- to C-terminus: Large ribosomal subunit protein bL35 (65 aa).

It belongs to the bacterial ribosomal protein bL35 family.

In Laribacter hongkongensis (strain HLHK9), this protein is Large ribosomal subunit protein bL35.